Consider the following 352-residue polypeptide: F-box/kelch-repeat protein At1g57790 (352 aa).

The F-box domain occupies 10-56 (KNLWKDLPLELLSSVMTFLEIKDNVRASVVCKSWFEAAVSVRVIDKS). Kelch repeat units lie at residues 148 to 189 (VVFT…HNNV) and 190 to 234 (VFSN…WNEG).

The sequence is that of F-box/kelch-repeat protein At1g57790 from Arabidopsis thaliana (Mouse-ear cress).